A 121-amino-acid chain; its full sequence is Flagellar protein FliT (121 aa).

The tract at residues Met1 to Leu50 is required for homodimerization. The fliD binding stretch occupies residues Met60–Val98.

The protein belongs to the FliT family. Homodimer. Interacts with FliD and FlhC.

The protein localises to the cytoplasm. It is found in the cytosol. In terms of biological role, dual-function protein that regulates the transcription of class 2 flagellar operons and that also acts as an export chaperone for the filament-capping protein FliD. As a transcriptional regulator, acts as an anti-FlhDC factor; it directly binds FlhC, thus inhibiting the binding of the FlhC/FlhD complex to class 2 promoters, resulting in decreased expression of class 2 flagellar operons. As a chaperone, effects FliD transition to the membrane by preventing its premature polymerization, and by directing it to the export apparatus. The sequence is that of Flagellar protein FliT from Escherichia coli O17:K52:H18 (strain UMN026 / ExPEC).